Here is a 400-residue protein sequence, read N- to C-terminus: Eukaryotic translation initiation factor 3 subunit M (400 aa).

Residues 180–354 (LIAKIYSALV…QSFAVHRAQK (175 aa)) form the PCI domain.

Belongs to the eIF-3 subunit M family. As to quaternary structure, component of the eukaryotic translation initiation factor 3 (eIF-3) complex.

Its subcellular location is the cytoplasm. Its function is as follows. Component of the eukaryotic translation initiation factor 3 (eIF-3) complex, which is involved in protein synthesis of a specialized repertoire of mRNAs and, together with other initiation factors, stimulates binding of mRNA and methionyl-tRNAi to the 40S ribosome. The eIF-3 complex specifically targets and initiates translation of a subset of mRNAs involved in cell proliferation. The chain is Eukaryotic translation initiation factor 3 subunit M from Yarrowia lipolytica (strain CLIB 122 / E 150) (Yeast).